We begin with the raw amino-acid sequence, 218 residues long: Non-structural protein NS3 (218 aa).

Belongs to the orbivirus NS3 family.

In terms of biological role, may play a role in the release of virions from infected cells. This chain is Non-structural protein NS3 (Segment-10), found in Camelus dromedarius (Dromedary).